Here is a 237-residue protein sequence, read N- to C-terminus: 7-cyano-7-deazaguanine synthase (237 aa).

Phenylalanine 10 to leucine 20 is an ATP binding site. Cysteine 189, cysteine 198, cysteine 201, and cysteine 204 together coordinate Zn(2+).

This sequence belongs to the QueC family. Zn(2+) is required as a cofactor.

It catalyses the reaction 7-carboxy-7-deazaguanine + NH4(+) + ATP = 7-cyano-7-deazaguanine + ADP + phosphate + H2O + H(+). It participates in purine metabolism; 7-cyano-7-deazaguanine biosynthesis. Catalyzes the ATP-dependent conversion of 7-carboxy-7-deazaguanine (CDG) to 7-cyano-7-deazaguanine (preQ(0)). The polypeptide is 7-cyano-7-deazaguanine synthase (Aeromonas salmonicida (strain A449)).